A 291-amino-acid polypeptide reads, in one-letter code: MLKDLFKKSKYATVNPSAYKSKVVEEKPNIPSGMWTKCSNCNSMIYYEDLENNKYVCTKCNQHFRISPKERIKQIFDKDTFKEMWKSLKTNNPIDFEDYEEKINKSQSNTGSKEAVVTGVGRINDLEVACAIMDSFFMMGSMGTVVGEKITRIVEYATENNLPILIFTASGGARMQEGIFSLMQMAKISAALARHDEKGLLYITILTDPTTGGVTASFAMEGDIILSEPNTLVGFAGRRVIENTINETLPESFQKSEFLLEKGFIDSIVERKNMRAYLYKILILHGVNKYE.

The CoA carboxyltransferase N-terminal domain maps to 34–291; the sequence is MWTKCSNCNS…LILHGVNKYE (258 aa). The Zn(2+) site is built by Cys38, Cys41, Cys57, and Cys60. A C4-type zinc finger spans residues 38–60; it reads CSNCNSMIYYEDLENNKYVCTKC.

Belongs to the AccD/PCCB family. Acetyl-CoA carboxylase is a heterohexamer composed of biotin carboxyl carrier protein (AccB), biotin carboxylase (AccC) and two subunits each of ACCase subunit alpha (AccA) and ACCase subunit beta (AccD). The cofactor is Zn(2+).

The protein resides in the cytoplasm. It carries out the reaction N(6)-carboxybiotinyl-L-lysyl-[protein] + acetyl-CoA = N(6)-biotinyl-L-lysyl-[protein] + malonyl-CoA. It participates in lipid metabolism; malonyl-CoA biosynthesis; malonyl-CoA from acetyl-CoA: step 1/1. Functionally, component of the acetyl coenzyme A carboxylase (ACC) complex. Biotin carboxylase (BC) catalyzes the carboxylation of biotin on its carrier protein (BCCP) and then the CO(2) group is transferred by the transcarboxylase to acetyl-CoA to form malonyl-CoA. This chain is Acetyl-coenzyme A carboxylase carboxyl transferase subunit beta, found in Clostridium botulinum (strain Alaska E43 / Type E3).